Reading from the N-terminus, the 201-residue chain is Small ribosomal subunit protein uS4c (201 aa).

The tract at residues 15-43 (LGALPGLTRKTPKSGSNQKKKFHSGKKEQ) is disordered. Residues 89 to 150 (MRLDNILFRL…NQRSKRLVQN (62 aa)) enclose the S4 RNA-binding domain.

The protein belongs to the universal ribosomal protein uS4 family. In terms of assembly, part of the 30S ribosomal subunit. Contacts protein S5. The interaction surface between S4 and S5 is involved in control of translational fidelity.

The protein localises to the plastid. Its subcellular location is the chloroplast. Its function is as follows. One of the primary rRNA binding proteins, it binds directly to 16S rRNA where it nucleates assembly of the body of the 30S subunit. In terms of biological role, with S5 and S12 plays an important role in translational accuracy. This Sorghum bicolor (Sorghum) protein is Small ribosomal subunit protein uS4c (rps4).